The primary structure comprises 71 residues: Small ribosomal subunit protein bS21 (71 aa).

This sequence belongs to the bacterial ribosomal protein bS21 family.

The chain is Small ribosomal subunit protein bS21 from Shewanella amazonensis (strain ATCC BAA-1098 / SB2B).